Here is a 621-residue protein sequence, read N- to C-terminus: MHHVRMVKLPAEASDPHALRSRARRSWLVFAAVALVLLAAGLLLARDYGRSQALAGLAGQSRIDASLKASLLRAVVERQRALPLVLADDAAIRGALLSPDRPSLDRINRKLEALATSAEAAVIYLIDRSGVAVAASNWQEPTSFVGNDYAFRDYFRLAVRDGMAEHFAMGTVSNRPGLYISRRVDGPGGPLGVIVAKLEFDGVEADWQASGKPAYVTDRRGIVLITSLPSWRFMTTKPIAEDRLAPIRESLQFGDAPLLPLPFRKIEARPDGSSTLDALLPGDSTAAFLRVETMVPSTNWRLEQLSPLKAPLAAGAREAQLLTLAALVPLLALAALLLRRRQVVAMRSAEERLARNALEASVEERTRDLRMARDRLETEIADHRQTTEKLQAVQQDLVQANRLAILGQVAAGVAHEINQPVATIRAYADNARTFLHRGQTVTAAENMESIAELTERVGAITDELRRFARKGHFAAGPTAMKEVVEGALMLLRSRFAGRMDAIRLDLPPDGLQALGNRIRLEQVLINLLQNALEAIGDSEDGAIQVRCEEAAGGIALTVADNGPGIAADVREELFTPFNTSKEDGLGLGLAISKEIVSDYGGTIEVESGPSGTTFAVNLKKA.

The Cytoplasmic portion of the chain corresponds to 1–26 (MHHVRMVKLPAEASDPHALRSRARRS). A helical membrane pass occupies residues 27–45 (WLVFAAVALVLLAAGLLLA). Residues 46–320 (RDYGRSQALA…PLAAGAREAQ (275 aa)) are Periplasmic-facing. Residues 321-338 (LLTLAALVPLLALAALLL) form a helical membrane-spanning segment. Residues 339–621 (RRRQVVAMRS…TTFAVNLKKA (283 aa)) lie on the Cytoplasmic side of the membrane. A Histidine kinase domain is found at 412-621 (GVAHEINQPV…TTFAVNLKKA (210 aa)). A Phosphohistidine; by autocatalysis modification is found at His-415.

Autophosphorylated.

Its subcellular location is the cell inner membrane. It catalyses the reaction ATP + protein L-histidine = ADP + protein N-phospho-L-histidine.. Its function is as follows. Member of the two-component regulatory system DctB/DctD involved in the transport of C4-dicarboxylates. DctB functions as a membrane-associated protein kinase that phosphorylates DctD in response to environmental signals. This is C4-dicarboxylate transport sensor protein DctB (dctB) from Rhizobium meliloti (strain 1021) (Ensifer meliloti).